A 225-amino-acid polypeptide reads, in one-letter code: Phosphatidylserine decarboxylase proenzyme (225 aa).

The Schiff-base intermediate with substrate; via pyruvic acid role is filled by serine 195. Serine 195 carries the pyruvic acid (Ser); by autocatalysis modification.

This sequence belongs to the phosphatidylserine decarboxylase family. PSD-A subfamily. In terms of assembly, heterodimer of a large membrane-associated beta subunit and a small pyruvoyl-containing alpha subunit. It depends on pyruvate as a cofactor. Is synthesized initially as an inactive proenzyme. Formation of the active enzyme involves a self-maturation process in which the active site pyruvoyl group is generated from an internal serine residue via an autocatalytic post-translational modification. Two non-identical subunits are generated from the proenzyme in this reaction, and the pyruvate is formed at the N-terminus of the alpha chain, which is derived from the carboxyl end of the proenzyme. The post-translation cleavage follows an unusual pathway, termed non-hydrolytic serinolysis, in which the side chain hydroxyl group of the serine supplies its oxygen atom to form the C-terminus of the beta chain, while the remainder of the serine residue undergoes an oxidative deamination to produce ammonia and the pyruvoyl prosthetic group on the alpha chain.

The protein localises to the cell membrane. The enzyme catalyses a 1,2-diacyl-sn-glycero-3-phospho-L-serine + H(+) = a 1,2-diacyl-sn-glycero-3-phosphoethanolamine + CO2. It functions in the pathway phospholipid metabolism; phosphatidylethanolamine biosynthesis; phosphatidylethanolamine from CDP-diacylglycerol: step 2/2. Its function is as follows. Catalyzes the formation of phosphatidylethanolamine (PtdEtn) from phosphatidylserine (PtdSer). In Gluconacetobacter diazotrophicus (strain ATCC 49037 / DSM 5601 / CCUG 37298 / CIP 103539 / LMG 7603 / PAl5), this protein is Phosphatidylserine decarboxylase proenzyme.